The primary structure comprises 256 residues: Non-specific lipid transfer protein GPI-anchored 23 (256 aa).

Positions 1-21 (MKPSFVLLSIVLLLSSSLSDA) are cleaved as a signal peptide. N-linked (GlcNAc...) asparagine glycosylation occurs at N41. Cystine bridges form between C45-C88, C55-C72, C73-C113, and C86-C121. Residues 125–230 (TPAASTPVSP…SPSPSPSPSI (106 aa)) are disordered. Positions 138-230 (SPTTSPSSAK…SPSPSPSPSI (93 aa)) are enriched in low complexity. Residue S225 is the site of GPI-anchor amidated serine attachment. Residues 226–256 (PSPSISSSGILLVSKLFIAVVMVSSFLYILA) constitute a propeptide, removed in mature form.

This sequence belongs to the plant LTP family. Confined to the anthers of the inflorescence.

The protein resides in the cell membrane. Its function is as follows. Probable lipid transfer protein. The polypeptide is Non-specific lipid transfer protein GPI-anchored 23 (Arabidopsis thaliana (Mouse-ear cress)).